The sequence spans 465 residues: Putrescine aminotransferase (465 aa).

Pyridoxal 5'-phosphate contacts are provided by residues 150 to 151 (GT) and Q274. K300 bears the N6-(pyridoxal phosphate)lysine mark. Residue T332 coordinates pyridoxal 5'-phosphate.

The protein belongs to the class-III pyridoxal-phosphate-dependent aminotransferase family. Putrescine aminotransferase subfamily. Requires pyridoxal 5'-phosphate as cofactor.

The enzyme catalyses an alkane-alpha,omega-diamine + 2-oxoglutarate = an omega-aminoaldehyde + L-glutamate. It carries out the reaction putrescine + 2-oxoglutarate = 1-pyrroline + L-glutamate + H2O. The catalysed reaction is cadaverine + 2-oxoglutarate = 5-aminopentanal + L-glutamate. It functions in the pathway amine and polyamine degradation; putrescine degradation; 4-aminobutanal from putrescine (transaminase route): step 1/1. In terms of biological role, catalyzes the aminotransferase reaction from putrescine to 2-oxoglutarate, leading to glutamate and 4-aminobutanal, which spontaneously cyclizes to form 1-pyrroline. This is the first step in one of two pathways for putrescine degradation, where putrescine is converted into 4-aminobutanoate (gamma-aminobutyrate or GABA) via 4-aminobutanal. Also functions as a cadaverine transaminase in a a L-lysine degradation pathway to succinate that proceeds via cadaverine, glutarate and L-2-hydroxyglutarate. In Cronobacter sakazakii (strain ATCC BAA-894) (Enterobacter sakazakii), this protein is Putrescine aminotransferase.